The following is a 130-amino-acid chain: Glycine cleavage system H protein (130 aa).

The Lipoyl-binding domain occupies 23 to 105 (IGIIGITDFA…YGKGWMIKVE (83 aa)). K64 is modified (N6-lipoyllysine).

Belongs to the GcvH family. As to quaternary structure, the glycine cleavage system is composed of four proteins: P, T, L and H. (R)-lipoate serves as cofactor.

The glycine cleavage system catalyzes the degradation of glycine. The H protein shuttles the methylamine group of glycine from the P protein to the T protein. This is Glycine cleavage system H protein from Carboxydothermus hydrogenoformans (strain ATCC BAA-161 / DSM 6008 / Z-2901).